A 318-amino-acid polypeptide reads, in one-letter code: ADP-L-glycero-D-manno-heptose-6-epimerase (318 aa).

Residues 10–11 (FI), 31–32 (DD), Lys-38, Lys-53, 80–84 (EGACS), and Asn-97 contribute to the NADP(+) site. Residue Tyr-144 is the Proton acceptor of the active site. Lys-148 serves as a coordination point for NADP(+). Position 173 (Asn-173) interacts with substrate. NADP(+) is bound by residues Val-174 and Lys-182. Residue Lys-182 is the Proton acceptor of the active site. Residues Lys-184, His-191, 205-208 (FGAW), Arg-218, and Tyr-282 contribute to the substrate site.

Belongs to the NAD(P)-dependent epimerase/dehydratase family. HldD subfamily. As to quaternary structure, homopentamer. It depends on NADP(+) as a cofactor.

The enzyme catalyses ADP-D-glycero-beta-D-manno-heptose = ADP-L-glycero-beta-D-manno-heptose. Its pathway is nucleotide-sugar biosynthesis; ADP-L-glycero-beta-D-manno-heptose biosynthesis; ADP-L-glycero-beta-D-manno-heptose from D-glycero-beta-D-manno-heptose 7-phosphate: step 4/4. Its function is as follows. Catalyzes the interconversion between ADP-D-glycero-beta-D-manno-heptose and ADP-L-glycero-beta-D-manno-heptose via an epimerization at carbon 6 of the heptose. The polypeptide is ADP-L-glycero-D-manno-heptose-6-epimerase (Chromohalobacter salexigens (strain ATCC BAA-138 / DSM 3043 / CIP 106854 / NCIMB 13768 / 1H11)).